Reading from the N-terminus, the 22-residue chain is uncharacterized protein (22 aa).

The protein belongs to the asfivirus C84L family.

This is an uncharacterized protein from Ornithodoros (relapsing fever ticks).